Consider the following 192-residue polypeptide: MAIRRWLLERQKSTQAATSDDDTLSPLRSAAAAVTATATATTAVPPTLQDSAQAPSSPPPKRQRVIVGQQWQQPDSTRKVREGQVECQNDRSIRNPDSTDPRRGHSDLDAVPVIHLQGEANCLKCFRYRVQKHKDVLFVKASSTWHWACGNGDKTAFVTLWYKSQEQRAEFLTRVHLPKGVKALPGYMSAFV.

A compositionally biased stretch (low complexity) spans 38–47; sequence ATATTAVPPT. Residues 38–106 form a disordered region; that stretch reads ATATTAVPPT…DSTDPRRGHS (69 aa). Residues 76–106 are compositionally biased toward basic and acidic residues; that stretch reads STRKVREGQVECQNDRSIRNPDSTDPRRGHS.

Belongs to the papillomaviridae E8^E2C protein family.

It is found in the host nucleus. In terms of biological role, plays a role in limiting the replication of viral DNA in keratinocytes. Recruits the host NCoR/SMRT complex to viral replication foci to mediate repression of both viral replication and transcription. This chain is Protein E8^E2C, found in Human papillomavirus 57.